The primary structure comprises 142 residues: Hemoglobin subunit alpha-A (142 aa).

The Globin domain maps to 2-142; it reads VLSAADKTNV…VGTVLTAKYR (141 aa). Residue H59 coordinates O2. H88 contacts heme b.

Belongs to the globin family. In terms of assembly, heterotetramer of two alpha chains and two beta chains. As to expression, red blood cells.

Involved in oxygen transport from the lung to the various peripheral tissues. This is Hemoglobin subunit alpha-A (HBAA) from Anser anser anser (Western greylag goose).